A 120-amino-acid chain; its full sequence is Crustacean hyperglycemic hormones 1 (120 aa).

Residues 1 to 27 (MTAFRMVWSMLLASLLMLLVASSTAPA) form the signal peptide. Cystine bridges form between Cys53–Cys89, Cys69–Cys85, and Cys72–Cys98. Position 118 is a valine amide (Val118).

Belongs to the arthropod CHH/MIH/GIH/VIH hormone family.

Its subcellular location is the secreted. Hormone found in the sinus gland of isopods and decapods which controls the blood sugar level. Has a secretagogue action over the amylase released from the midgut gland. May act as a stress hormone and may be involved in the control of molting and reproduction. This Penaeus monodon (Giant tiger prawn) protein is Crustacean hyperglycemic hormones 1 (CHH1).